The primary structure comprises 830 residues: WD repeat-containing protein 75 (830 aa).

WD repeat units lie at residues 4 to 42 (EGVR…KVYS), 46 to 85 (EECV…KLWD), 89 to 130 (GILI…QLVS), 144 to 183 (RQLT…YFFK), 192 to 230 (LPST…RLWR), 236 to 275 (QKYT…VEWR), 278 to 317 (SEKN…TVIH), 323 to 361 (SAVI…QFYS), and 375 to 422 (QQEY…KLWN). Residue lysine 426 forms a Glycyl lysine isopeptide (Lys-Gly) (interchain with G-Cter in SUMO2) linkage. 4 WD repeats span residues 429-473 (GFVL…KVWI), 486-524 (AWTC…TIWD), 528-568 (WELK…CCWN), and 573-610 (SIQW…FVFK). Phosphoserine is present on residues serine 663 and serine 671. A Glycyl lysine isopeptide (Lys-Gly) (interchain with G-Cter in SUMO2) cross-link involves residue lysine 675. Positions 761–807 (KSAEEVPDDVDMEGNKESDDSDEEYDLTEKDKETNNNTDLGEDAIHQ) are disordered. Phosphoserine is present on residues serine 778 and serine 781. Tyrosine 785 is modified (phosphotyrosine). Residue serine 811 is modified to Phosphoserine.

As to quaternary structure, component of the proposed t-UTP subcomplex of the ribosomal small subunit (SSU) processome. SSU processome is composed of more than 70 proteins and the RNA chaperone small nucleolar RNA (snoRNA) U3.

Its subcellular location is the nucleus. The protein localises to the nucleolus. In terms of biological role, ribosome biogenesis factor. Part of the small subunit (SSU) processome, first precursor of the small eukaryotic ribosomal subunit. During the assembly of the SSU processome in the nucleolus, many ribosome biogenesis factors, an RNA chaperone and ribosomal proteins associate with the nascent pre-rRNA and work in concert to generate RNA folding, modifications, rearrangements and cleavage as well as targeted degradation of pre-ribosomal RNA by the RNA exosome. Involved in nucleolar processing of pre-18S ribosomal RNA. Required for optimal pre-ribosomal RNA transcription by RNA polymerase I. The protein is WD repeat-containing protein 75 (Wdr75) of Mus musculus (Mouse).